Here is a 434-residue protein sequence, read N- to C-terminus: Eukaryotic peptide chain release factor subunit 1-1 (434 aa).

This sequence belongs to the eukaryotic release factor 1 family. In terms of assembly, heterodimer of two subunits, one of which binds GTP.

The protein resides in the cytoplasm. Directs the termination of nascent peptide synthesis (translation) in response to the termination codons UAA, UAG and UGA. Modulates plant growth and development. The chain is Eukaryotic peptide chain release factor subunit 1-1 from Brassica oleracea var. botrytis (Cauliflower).